The sequence spans 109 residues: Large ribosomal subunit protein P1A (109 aa).

Positions 69–84 (APVAGGAAAPAAADGE) are enriched in low complexity. Positions 69–109 (APVAGGAAAPAAADGEAPAEEKEEAKEEEESDEDMGFGLFD) are disordered. The segment covering 94 to 103 (KEEEESDEDM) has biased composition (acidic residues).

The protein belongs to the eukaryotic ribosomal protein P1/P2 family. As to quaternary structure, component of the large ribosomal subunit (LSU). Mature yeast ribosomes consist of a small (40S) and a large (60S) subunit. The 40S small subunit contains 1 molecule of ribosomal RNA (18S rRNA) and at least 33 different proteins. The large 60S subunit contains 3 rRNA molecules (25S, 5.8S and 5S rRNA) and at least 46 different proteins. The acidic ribosomal P-proteins form the stalk structure of the 60S subunit. They are organized as a pentameric complex in which uL10/P0 interacts with 2 heterodimers of P1 and P2 proteins.

Its subcellular location is the cytoplasm. Component of the ribosome, a large ribonucleoprotein complex responsible for the synthesis of proteins in the cell. The small ribosomal subunit (SSU) binds messenger RNAs (mRNAs) and translates the encoded message by selecting cognate aminoacyl-transfer RNA (tRNA) molecules. The large subunit (LSU) contains the ribosomal catalytic site termed the peptidyl transferase center (PTC), which catalyzes the formation of peptide bonds, thereby polymerizing the amino acids delivered by tRNAs into a polypeptide chain. The nascent polypeptides leave the ribosome through a tunnel in the LSU and interact with protein factors that function in enzymatic processing, targeting, and the membrane insertion of nascent chains at the exit of the ribosomal tunnel. The chain is Large ribosomal subunit protein P1A (rpp101) from Schizosaccharomyces pombe (strain 972 / ATCC 24843) (Fission yeast).